The sequence spans 109 residues: Large ribosomal subunit protein uL24 (109 aa).

It belongs to the universal ribosomal protein uL24 family. In terms of assembly, part of the 50S ribosomal subunit.

Functionally, one of two assembly initiator proteins, it binds directly to the 5'-end of the 23S rRNA, where it nucleates assembly of the 50S subunit. One of the proteins that surrounds the polypeptide exit tunnel on the outside of the subunit. This chain is Large ribosomal subunit protein uL24, found in Rickettsia bellii (strain RML369-C).